The chain runs to 123 residues: Beta-2-microglobulin (123 aa).

The first 21 residues, 1–21, serve as a signal peptide directing secretion; it reads MSRLFLFALLGHLCFLPYLDA. The 90-residue stretch at 29-118 folds into the Ig-like C1-type domain; sequence PRVQVYSRYP…STLNEPKVVK (90 aa). A disulfide bridge links cysteine 49 with cysteine 104.

This sequence belongs to the beta-2-microglobulin family. As to quaternary structure, heterodimer of an alpha chain and a beta chain. Beta-2-microglobulin is the beta-chain of major histocompatibility complex class I molecules.

It is found in the secreted. Component of the class I major histocompatibility complex (MHC). Involved in the presentation of peptide antigens to the immune system. The protein is Beta-2-microglobulin (B2M) of Monodelphis domestica (Gray short-tailed opossum).